We begin with the raw amino-acid sequence, 748 residues long: CCR4-NOT transcription complex subunit 10-A (748 aa).

The segment covering 1-17 (MAADKAGEQGAEKHEDS) has biased composition (basic and acidic residues). Disordered stretches follow at residues 1 to 25 (MAAD…GISD), 184 to 205 (SNNK…EPFA), 483 to 524 (KQEN…PPSS), and 605 to 635 (VSLG…QMPQ). Positions 185–200 (NNKNGKNNETNSNANN) are enriched in low complexity. 2 stretches are compositionally biased toward polar residues: residues 487–509 (GSKT…VCSN) and 605–615 (VSLGVSSNEQE).

The protein belongs to the CNOT10 family. As to quaternary structure, component of the CCR4-NOT complex. cnot10 and cnot11 form a subcomplex docked to the cnot1 scaffold.

Its subcellular location is the cytoplasm. It is found in the nucleus. Functionally, component of the CCR4-NOT complex which is one of the major cellular mRNA deadenylases and is linked to various cellular processes including bulk mRNA degradation, miRNA-mediated repression, translational repression during translational initiation and general transcription regulation. Additional complex functions may be a consequence of its influence on mRNA expression. Is not required for association of CNOT7 to the CCR4-NOT complex. This is CCR4-NOT transcription complex subunit 10-A (cnot10-a) from Xenopus laevis (African clawed frog).